A 660-amino-acid chain; its full sequence is DNA mismatch repair protein MutL (660 aa).

Disordered stretches follow at residues 368–426 (PQQT…PTKK) and 439–461 (NREQ…STQQ). Positions 406-417 (SSSSNSTAPSRS) are enriched in low complexity.

Belongs to the DNA mismatch repair MutL/HexB family.

In terms of biological role, this protein is involved in the repair of mismatches in DNA. It is required for dam-dependent methyl-directed DNA mismatch repair. May act as a 'molecular matchmaker', a protein that promotes the formation of a stable complex between two or more DNA-binding proteins in an ATP-dependent manner without itself being part of a final effector complex. This Aliivibrio fischeri (strain ATCC 700601 / ES114) (Vibrio fischeri) protein is DNA mismatch repair protein MutL.